The chain runs to 914 residues: Sensor protein TorS (914 aa).

The Cytoplasmic portion of the chain corresponds to Met-1–Arg-8. Residues Leu-9–Tyr-29 traverse the membrane as a helical segment. Residues Asn-30 to Ser-332 lie on the Periplasmic side of the membrane. A helical membrane pass occupies residues Leu-333–Tyr-353. The HAMP domain occupies Arg-354–Arg-407. At Arg-354 to Ile-914 the chain is on the cytoplasmic side. Positions Ala-450 to Val-664 constitute a Histidine kinase domain. Phosphohistidine; by autocatalysis is present on His-453. In terms of domain architecture, Response regulatory spans Arg-683–Leu-798. Asp-733 bears the 4-aspartylphosphate mark. An HPt domain is found at Gly-821–Ile-914. At His-860 the chain carries Phosphohistidine.

May form homomultimers. Seems to interact with TorT and TorC apocytochrome. Post-translationally, activation requires a sequential transfer of a phosphate group from a His in the primary transmitter domain, to an Asp in the receiver domain and to a His in the secondary transmitter domain.

The protein resides in the cell inner membrane. It catalyses the reaction ATP + protein L-histidine = ADP + protein N-phospho-L-histidine.. With respect to regulation, inhibited by TorC apocytochrome. Functionally, member of the two-component regulatory system TorS/TorR involved in the anaerobic utilization of trimethylamine-N-oxide (TMAO). Detects the presence of TMAO in the medium and, in response, activates TorR via a four-step phosphorelay. When TMAO is removed, TorS can dephosphorylate TorR, probably by a reverse phosphorelay involving His-860 and Asp-733. The protein is Sensor protein TorS (torS) of Escherichia coli (strain K12).